The sequence spans 116 residues: MREKLTKLKKTQEFKRVYSNGKTVANRFIVMYYMPNGLQVNRAGYSVSKKIGKSVVRNRVKRLLHESFRLLNSNLRQGYDVVFVARGKIAEADFHTLKESIEKLLKKTPLYEEKER.

It belongs to the RnpA family. Consists of a catalytic RNA component (M1 or rnpB) and a protein subunit.

The enzyme catalyses Endonucleolytic cleavage of RNA, removing 5'-extranucleotides from tRNA precursor.. RNaseP catalyzes the removal of the 5'-leader sequence from pre-tRNA to produce the mature 5'-terminus. It can also cleave other RNA substrates such as 4.5S RNA. The protein component plays an auxiliary but essential role in vivo by binding to the 5'-leader sequence and broadening the substrate specificity of the ribozyme. In Caldanaerobacter subterraneus subsp. tengcongensis (strain DSM 15242 / JCM 11007 / NBRC 100824 / MB4) (Thermoanaerobacter tengcongensis), this protein is Ribonuclease P protein component.